Here is a 196-residue protein sequence, read N- to C-terminus: ATP-dependent Clp protease proteolytic subunit (196 aa).

The active-site Nucleophile is the Ser98. His123 is a catalytic residue.

It belongs to the peptidase S14 family. Fourteen ClpP subunits assemble into 2 heptameric rings which stack back to back to give a disk-like structure with a central cavity, resembling the structure of eukaryotic proteasomes.

It is found in the cytoplasm. The enzyme catalyses Hydrolysis of proteins to small peptides in the presence of ATP and magnesium. alpha-casein is the usual test substrate. In the absence of ATP, only oligopeptides shorter than five residues are hydrolyzed (such as succinyl-Leu-Tyr-|-NHMec, and Leu-Tyr-Leu-|-Tyr-Trp, in which cleavage of the -Tyr-|-Leu- and -Tyr-|-Trp bonds also occurs).. In terms of biological role, cleaves peptides in various proteins in a process that requires ATP hydrolysis. Has a chymotrypsin-like activity. Plays a major role in the degradation of misfolded proteins. In Actinobacillus pleuropneumoniae serotype 7 (strain AP76), this protein is ATP-dependent Clp protease proteolytic subunit.